The chain runs to 951 residues: Protein translocase subunit SecA 1 (951 aa).

Residues Gln87, 105–109, and Asp525 each bind ATP; that span reads GEGKT. The interval 911–942 is disordered; that stretch reads PVVSADRSSRDPGNPASWGKVGRNEDCPCGSG. Positions 937, 939, 948, and 949 each coordinate Zn(2+).

This sequence belongs to the SecA family. As to quaternary structure, monomer and homodimer. Part of the essential Sec protein translocation apparatus which comprises SecA, SecYEG and auxiliary proteins SecDF-YajC and YidC. Zn(2+) serves as cofactor.

It is found in the cell inner membrane. The protein localises to the cytoplasm. It carries out the reaction ATP + H2O + cellular proteinSide 1 = ADP + phosphate + cellular proteinSide 2.. Functionally, part of the Sec protein translocase complex. Interacts with the SecYEG preprotein conducting channel. Has a central role in coupling the hydrolysis of ATP to the transfer of proteins into and across the cell membrane, serving both as a receptor for the preprotein-SecB complex and as an ATP-driven molecular motor driving the stepwise translocation of polypeptide chains across the membrane. The sequence is that of Protein translocase subunit SecA 1 from Nitrobacter hamburgensis (strain DSM 10229 / NCIMB 13809 / X14).